The chain runs to 340 residues: Extracellular matrix protein-binding protein emp (340 aa).

Positions 1–26 (MKKKLLVLTMSTLFATQLINSNHANA) are cleaved as a signal peptide.

The protein resides in the cell surface. In terms of biological role, adhesin that binds to the host cell extracellular matrix proteins fibronectin, fibrinogen, collagen, and vitronectin. This Staphylococcus aureus protein is Extracellular matrix protein-binding protein emp (emp).